A 1209-amino-acid chain; its full sequence is Phospholipid-transporting ATPase ID (1209 aa).

Residues 1-68 (MTVPKEIPEK…NIVTFLPVNL (68 aa)) lie on the Cytoplasmic side of the membrane. Residues 12–36 (ARAGAPPSWSQKKPSWGTEEERRAR) form a disordered region. Residues 69-89 (FEQFQEVANTYFLFLLILQLI) form a helical membrane-spanning segment. The Exoplasmic loop portion of the chain corresponds to 90 to 91 (PQ). The chain crosses the membrane as a helical span at residues 92 to 112 (ISSLSWFTTIVPLVLVLTITA). The Cytoplasmic portion of the chain corresponds to 113–295 (VKDATDDYFR…TSIDRLMNTL (183 aa)). Residues 296–316 (VLWIFGFLVCMGVILAIGNAI) traverse the membrane as a helical segment. Topologically, residues 317–338 (WEHEVGTRFQVYLPWDEAVDSA) are exoplasmic loop. A helical membrane pass occupies residues 339–359 (FFSGFLSFWSYIIILNTVVPI). The Cytoplasmic segment spans residues 360–898 (SLYVSVEVIR…KFLCYFFYKN (539 aa)). The active-site 4-aspartylphosphate intermediate is D411. ATP contacts are provided by D411, K412, T413, E515, F556, K579, R613, T693, G694, D695, R807, and K813. D411 is a binding site for Mg(2+). T413 is a Mg(2+) binding site. D833 lines the Mg(2+) pocket. Residues N836 and D837 each contribute to the ATP site. Position 837 (D837) interacts with Mg(2+). The chain crosses the membrane as a helical span at residues 899-919 (FAFTMVHFWFGFFCGFSAQTV). Residues 920–922 (YDQ) are Exoplasmic loop-facing. The helical transmembrane segment at 923–943 (YFITLYNIVYTSLPVLAMGVF) threads the bilayer. At 944–972 (DQDVPEQRSMEYPKLYEPGQLNLLFNKRE) the chain is on the cytoplasmic side. Residues 973–993 (FFICIAQGIYTSVLMFFIPYG) form a helical membrane-spanning segment. The Exoplasmic loop portion of the chain corresponds to 994-1011 (VFAEATRDDGTQLADYQS). A helical transmembrane segment spans residues 1012–1032 (FAVTVATSLVIVVSVQIGLDT). The Cytoplasmic portion of the chain corresponds to 1033–1036 (GYWT). A helical membrane pass occupies residues 1037–1057 (AINHFFIWGSLAVYFAILFAM). Residues 1058–1082 (HSNGLFDMFPNQFRFVGNAQNTLAQ) lie on the Exoplasmic loop side of the membrane. Residues 1083-1103 (PTVWLTIALTTAVCIMPVVAF) form a helical membrane-spanning segment. The Cytoplasmic segment spans residues 1104-1209 (RFLRLSLKPD…SGGAEKPLKG (106 aa)). Residue S1175 is modified to Phosphoserine. Positions 1179-1209 (RSSSSWIESLRRKKSDSANSPSGGAEKPLKG) are disordered.

Belongs to the cation transport ATPase (P-type) (TC 3.A.3) family. Type IV subfamily. Component of a P4-ATPase flippase complex which consists of a catalytic alpha subunit ATP8B2 and an accessory beta subunit TMEM30A or TMEM30B. The cofactor is Mg(2+). Expressed in brain and testes (at protein level).

The protein resides in the cell membrane. The protein localises to the endoplasmic reticulum membrane. It catalyses the reaction ATP + H2O + phospholipidSide 1 = ADP + phosphate + phospholipidSide 2.. The catalysed reaction is a 1,2-diacyl-sn-glycero-3-phosphocholine(out) + ATP + H2O = a 1,2-diacyl-sn-glycero-3-phosphocholine(in) + ADP + phosphate + H(+). Its function is as follows. Catalytic component of P4-ATPase flippase complex, which catalyzes the hydrolysis of ATP coupled to the transport of phosphatidylcholine (PC) from the outer to the inner leaflet of the plasma membrane. May contribute to the maintenance of membrane lipid asymmetry. This is Phospholipid-transporting ATPase ID from Mus musculus (Mouse).